Consider the following 340-residue polypeptide: Putative D-lactate dehydrogenase (340 aa).

Residues 153–154 (NI), aspartate 174, 206–207 (TP), 233–235 (VSR), and aspartate 259 each bind NAD(+). The active site involves arginine 235. Residue glutamate 264 is part of the active site. The active-site Proton donor is histidine 296.

This sequence belongs to the D-isomer specific 2-hydroxyacid dehydrogenase family.

It carries out the reaction (R)-lactate + NAD(+) = pyruvate + NADH + H(+). This is Putative D-lactate dehydrogenase (ldhA) from Dictyostelium discoideum (Social amoeba).